The chain runs to 64 residues: MPKMKTKSGAKKRFKPTASGFKHKHAFKSHILTKMTTKRKRQLRGTSLMHPSDVAKVERMLRVR.

Residues 1 to 27 (MPKMKTKSGAKKRFKPTASGFKHKHAF) are disordered.

This sequence belongs to the bacterial ribosomal protein bL35 family.

The sequence is that of Large ribosomal subunit protein bL35 from Azotobacter vinelandii (strain DJ / ATCC BAA-1303).